We begin with the raw amino-acid sequence, 255 residues long: Ribosome maturation factor RimP (255 aa).

The tract at residues 177 to 255 (LRRGSAPPQD…ARLKNRDTLH (79 aa)) is disordered. Over residues 186–202 (DGEDVDEEAGEAPEDEV) the composition is skewed to acidic residues. The segment covering 216–230 (PKMDKKSDKKSDKPV) has biased composition (basic and acidic residues).

It belongs to the RimP family.

It is found in the cytoplasm. Required for maturation of 30S ribosomal subunits. The sequence is that of Ribosome maturation factor RimP from Methylorubrum populi (strain ATCC BAA-705 / NCIMB 13946 / BJ001) (Methylobacterium populi).